Consider the following 639-residue polypeptide: UvrABC system protein C (639 aa).

A GIY-YIG domain is found at 20-97 (ERSGVYRMFD…IKKFQPKFNI (78 aa)). The region spanning 207–242 (KELQENLSRKMEELSSQMRFEEAAEIRDRIKALSYV) is the UVR domain.

The protein belongs to the UvrC family. As to quaternary structure, interacts with UvrB in an incision complex.

Its subcellular location is the cytoplasm. Functionally, the UvrABC repair system catalyzes the recognition and processing of DNA lesions. UvrC both incises the 5' and 3' sides of the lesion. The N-terminal half is responsible for the 3' incision and the C-terminal half is responsible for the 5' incision. The protein is UvrABC system protein C of Rickettsia rickettsii (strain Iowa).